A 204-amino-acid chain; its full sequence is MSIMSYTGGTVVAMAGDECVCIASDLRIGEQMTTIATDQKKVHKVTDKVYVGLAGFQSDARTVLEKIMFRKNLYELRENRNIKPQVLSEMISNLAYQHRFGSYFTEPLVAGLDDTNKPYICCMDTIGCVSAPRDFVAVGTGQEYLLGVCENFWRENMKPDELFEATAQSILSCLERDAASGWGAVVYTITKDKVNVSTIKARMD.

The protein belongs to the peptidase T1B family. In terms of assembly, the 26S proteasome consists of a 20S proteasome core and two 19S regulatory subunits. The 20S proteasome core is composed of 28 subunits that are arranged in four stacked rings, resulting in a barrel-shaped structure. The two end rings are each formed by seven alpha subunits, and the two central rings are each formed by seven beta subunits. The catalytic chamber with the active sites is on the inside of the barrel.

The protein resides in the cytoplasm. It is found in the nucleus. Non-catalytic component of the proteasome, a multicatalytic proteinase complex which is characterized by its ability to cleave peptides with Arg, Phe, Tyr, Leu, and Glu adjacent to the leaving group at neutral or slightly basic pH. The proteasome has an ATP-dependent proteolytic activity. This Caenorhabditis elegans protein is Proteasome subunit beta type-3 (pbs-3).